A 158-amino-acid chain; its full sequence is PTS system fructose-specific EIIB component (158 aa).

Positions 1 to 98 (MKLVAVTSCP…AEAVVQKAVE (98 aa)) constitute a PTS EIIB type-2 domain. The Phosphocysteine intermediate role is filled by cysteine 9. Residue cysteine 9 is modified to Phosphocysteine; by EIIA. The interval 104–147 (KTGSVTFGSGDDGEDADVGADDSSDDADAAESDEPVRRGGDPEK) is disordered. The segment covering 114–136 (DDGEDADVGADDSSDDADAAESD) has biased composition (acidic residues). The span at 137–147 (EPVRRGGDPEK) shows a compositional bias: basic and acidic residues.

It localises to the cytoplasm. The catalysed reaction is D-fructose(out) + N(pros)-phospho-L-histidyl-[protein] = D-fructose 1-phosphate(in) + L-histidyl-[protein]. Functionally, the phosphoenolpyruvate-dependent sugar phosphotransferase system (sugar PTS), a major carbohydrate active transport system, catalyzes the phosphorylation of incoming sugar substrates concomitantly with their translocation across the cell membrane. The enzyme II PtfABC PTS system is involved in fructose transport. This is PTS system fructose-specific EIIB component from Haloferax volcanii (strain ATCC 29605 / DSM 3757 / JCM 8879 / NBRC 14742 / NCIMB 2012 / VKM B-1768 / DS2) (Halobacterium volcanii).